The chain runs to 391 residues: MAFKRMTDIDLAGKRVLIREDFNVPVKDGRVTSDARIRAALPTIRHALDAGAAVMLMSHLGRPTEGEYAEEFSMKPVADRLSELLGQPVTLVKDYLGGADPAVGSVVLFENVRFNKGEKKDDEVLARQLAALCDVYVMDAFGTAHRAEASTHGVGKYAPTACAGLLLATELDALGRALHDPARPLVAIVGGSKVSTKLTVLDSLSQVVDQLIVGGGIANTFIKAAGFNVGKSLYEEDLVAEARRLMEAAKAKGGEIPVPVDVVVGKRFDAAEPAMVKSVADIAEDDMILDIGPETSRRYAEFIGRAGTVVWNGPVGVFEFDQFGEGTRRLGLAIAESHAFSIAGGGDTLAAIDKYGIADRISYISTGGGAFLEFLEGKQLPAVAMLESRAD.

Substrate contacts are provided by residues 21 to 23 (DFN), R36, 59 to 62 (HLGR), R113, and R146. ATP-binding positions include K197, E319, and 345–348 (GGDT).

This sequence belongs to the phosphoglycerate kinase family. As to quaternary structure, monomer.

The protein localises to the cytoplasm. It catalyses the reaction (2R)-3-phosphoglycerate + ATP = (2R)-3-phospho-glyceroyl phosphate + ADP. It functions in the pathway carbohydrate degradation; glycolysis; pyruvate from D-glyceraldehyde 3-phosphate: step 2/5. The sequence is that of Phosphoglycerate kinase from Methylococcus capsulatus (strain ATCC 33009 / NCIMB 11132 / Bath).